A 349-amino-acid polypeptide reads, in one-letter code: Protein-glutamate methylesterase/protein-glutamine glutaminase 1 (349 aa).

The 118-residue stretch at 2-119 (RTLIVDDSAF…DVNKAEKELV (118 aa)) folds into the Response regulatory domain. D53 carries the post-translational modification 4-aspartylphosphate. The CheB-type methylesterase domain maps to 158–345 (ILIGSSTGGP…EEIVKRLEAK (188 aa)). Active-site residues include S163, H190, and D287.

It belongs to the CheB family. Phosphorylated by CheA. Phosphorylation of the N-terminal regulatory domain activates the methylesterase activity.

It is found in the cytoplasm. It catalyses the reaction [protein]-L-glutamate 5-O-methyl ester + H2O = L-glutamyl-[protein] + methanol + H(+). The enzyme catalyses L-glutaminyl-[protein] + H2O = L-glutamyl-[protein] + NH4(+). In terms of biological role, involved in chemotaxis. Part of a chemotaxis signal transduction system that modulates chemotaxis in response to various stimuli. Catalyzes the demethylation of specific methylglutamate residues introduced into the chemoreceptors (methyl-accepting chemotaxis proteins or MCP) by CheR. Also mediates the irreversible deamidation of specific glutamine residues to glutamic acid. The sequence is that of Protein-glutamate methylesterase/protein-glutamine glutaminase 1 from Methanosarcina acetivorans (strain ATCC 35395 / DSM 2834 / JCM 12185 / C2A).